Here is a 60-residue protein sequence, read N- to C-terminus: Potassium channel toxin MeuTXKalpha3 (60 aa).

The signal sequence occupies residues 1–22; that stretch reads MKNYCGIITLFLAIISATGVFC. Intrachain disulfides connect Cys-32/Cys-50, Cys-37/Cys-55, and Cys-41/Cys-57. Pro-59 carries the proline amide modification.

The protein belongs to the short scorpion toxin superfamily. Potassium channel inhibitor family. As to expression, expressed by the venom gland.

The protein resides in the secreted. Its function is as follows. May block voltage-gated potassium channels (Kv). The sequence is that of Potassium channel toxin MeuTXKalpha3 from Mesobuthus eupeus (Lesser Asian scorpion).